We begin with the raw amino-acid sequence, 447 residues long: 3-phosphoshikimate 1-carboxyvinyltransferase 2 (447 aa).

3-phosphoshikimate is bound by residues Lys-40, Ser-41, and Arg-45. A phosphoenolpyruvate-binding site is contributed by Lys-40. Phosphoenolpyruvate contacts are provided by Gly-109 and Arg-138. Positions 184, 185, 186, 329, and 356 each coordinate 3-phosphoshikimate. Gln-186 contacts phosphoenolpyruvate. The active-site Proton acceptor is Asp-329. Positions 360, 403, and 428 each coordinate phosphoenolpyruvate.

Belongs to the EPSP synthase family. Monomer.

It is found in the cytoplasm. It catalyses the reaction 3-phosphoshikimate + phosphoenolpyruvate = 5-O-(1-carboxyvinyl)-3-phosphoshikimate + phosphate. It functions in the pathway metabolic intermediate biosynthesis; chorismate biosynthesis; chorismate from D-erythrose 4-phosphate and phosphoenolpyruvate: step 6/7. Its function is as follows. Catalyzes the transfer of the enolpyruvyl moiety of phosphoenolpyruvate (PEP) to the 5-hydroxyl of shikimate-3-phosphate (S3P) to produce enolpyruvyl shikimate-3-phosphate and inorganic phosphate. This chain is 3-phosphoshikimate 1-carboxyvinyltransferase 2, found in Halalkalibacterium halodurans (strain ATCC BAA-125 / DSM 18197 / FERM 7344 / JCM 9153 / C-125) (Bacillus halodurans).